Consider the following 345-residue polypeptide: Anthranilate phosphoribosyltransferase (345 aa).

Residues Gly-80, 83-84 (GD), Thr-88, 90-93 (NIST), 108-116 (KHGNRSVTS), and Ser-120 each bind 5-phospho-alpha-D-ribose 1-diphosphate. An anthranilate-binding site is contributed by Gly-80. Position 92 (Ser-92) interacts with Mg(2+). Asn-111 is an anthranilate binding site. Arg-166 provides a ligand contact to anthranilate. The Mg(2+) site is built by Asp-229 and Glu-230.

The protein belongs to the anthranilate phosphoribosyltransferase family. As to quaternary structure, homodimer. Mg(2+) serves as cofactor.

It carries out the reaction N-(5-phospho-beta-D-ribosyl)anthranilate + diphosphate = 5-phospho-alpha-D-ribose 1-diphosphate + anthranilate. The protein operates within amino-acid biosynthesis; L-tryptophan biosynthesis; L-tryptophan from chorismate: step 2/5. Its function is as follows. Catalyzes the transfer of the phosphoribosyl group of 5-phosphorylribose-1-pyrophosphate (PRPP) to anthranilate to yield N-(5'-phosphoribosyl)-anthranilate (PRA). The chain is Anthranilate phosphoribosyltransferase from Chlorobium phaeobacteroides (strain BS1).